We begin with the raw amino-acid sequence, 706 residues long: Transmembrane and coiled-coil domains protein 2 (706 aa).

Disordered regions lie at residues 1–221 and 251–280; these read MKRC…TTDT and VALS…PDPQ. Ser-6 carries the post-translational modification Phosphoserine. Positions 83-94 are enriched in basic residues; sequence GLKHLFHSRRRS. Residues 102–112 show a composition bias toward low complexity; the sequence is SQEAQQQQQQQ. Over residues 120 to 131 the composition is skewed to basic and acidic residues; it reads PDEKERSPEMHR. Arg-163 carries the post-translational modification Omega-N-methylarginine. Positions 330–365 form a coiled coil; that stretch reads KQVFEKKNQKSAQTIAQLHKKLEHYRRRLKEIEQNG. Residue Ser-435 is modified to Phosphoserine. Residues 440-459 form a disordered region; it reads AHLKDPMEDGPPEEAARALS. A phosphoserine mark is found at Ser-461 and Ser-467. The disordered stretch occupies residues 464 to 510; that stretch reads LVSSPKYGSDDECSSASASSAGAGSNSGAGPGGALGSPRSNTLYGAP. Over residues 477 to 487 the composition is skewed to low complexity; sequence SSASASSAGAG. The span at 488 to 498 shows a compositional bias: gly residues; sequence SNSGAGPGGAL. The residue at position 500 (Ser-500) is a Phosphoserine. Residues 511-630 adopt a coiled-coil conformation; sequence GNLDTLLEEL…QQQQVVQLEG (120 aa). The next 2 membrane-spanning stretches (helical) occupy residues 646–666 and 679–699; these read VILA…NFIT and ALLL…TYLL.

Belongs to the TEX28 family. In terms of assembly, may form homodimers and heterodimers with TMCC2 or TMCC3 via the coiled-coil domains. Interacts with ribosomal proteins RPL4 and RPS6. Interacts with APOE and proteolytic processed C-terminal fragment C99 of the amyloid precursor protein (APP C99).

The protein resides in the endoplasmic reticulum membrane. In terms of biological role, may be involved in the regulation of the proteolytic processing of the amyloid precursor protein (APP) possibly also implicating APOE. This Mus musculus (Mouse) protein is Transmembrane and coiled-coil domains protein 2.